The chain runs to 107 residues: Nucleoid-associated protein R00231 (107 aa).

The protein belongs to the YbaB/EbfC family. In terms of assembly, homodimer.

It localises to the cytoplasm. The protein resides in the nucleoid. Binds to DNA and alters its conformation. May be involved in regulation of gene expression, nucleoid organization and DNA protection. The protein is Nucleoid-associated protein R00231 of Rhizobium meliloti (strain 1021) (Ensifer meliloti).